Consider the following 388-residue polypeptide: MMKKSIINTLIFTSIATFPLYTLAQTKLTELQVATIVNNTLTPLLEKQGIPGMAVAVFYDGKPQFFNYGMADIKAGRPVTENTLFELGSVSKTFTGVAGEYAMQTGIMNLNDPVTEYAPELTGSQWKDVKMLHLATYTAGGLPLQLPDSVTDQKSLWQYYQQWQPQWAPGVMRNYSNASIGLFGALAVKRSQLTFENYMKEYVFQPLKLDHTFITIPESMQSNYAWGYKDGQPVRVTLGMLGEEAYGVKSTSQDMVRFMQANMDPESLPAGNDKLKEAIIASQSRYFQAGDMFQGLGWEMYSWPINPQGVIADSGNDIALKPRKVEALVPAQPAVRASWVHKTGATNGFGAYIVFIPEEKVGIVMLANKNYPNPVRVQAAYDILQALR.

The N-terminal stretch at 1 to 24 (MMKKSIINTLIFTSIATFPLYTLA) is a signal peptide. Ser89 functions as the Acyl-ester intermediate in the catalytic mechanism. Tyr175 functions as the Proton acceptor in the catalytic mechanism. Residue 342 to 344 (KTG) participates in substrate binding.

Belongs to the class-C beta-lactamase family.

It is found in the periplasm. The enzyme catalyses a beta-lactam + H2O = a substituted beta-amino acid. This protein is a serine beta-lactamase with a substrate specificity for cephalosporins. The chain is Beta-lactamase (ampC) from Yersinia enterocolitica.